The primary structure comprises 246 residues: 3'(2'),5'-bisphosphate nucleotidase CysQ (246 aa).

Residues Glu64, Asp83, Leu85, Asp86, and Asp205 each contribute to the Mg(2+) site. Glu64 is a substrate binding site. Substrate is bound by residues 85-88 (LDGT) and Asp205.

Belongs to the inositol monophosphatase superfamily. CysQ family. The cofactor is Mg(2+).

It localises to the cell inner membrane. The enzyme catalyses adenosine 3',5'-bisphosphate + H2O = AMP + phosphate. Functionally, converts adenosine-3',5'-bisphosphate (PAP) to AMP. The protein is 3'(2'),5'-bisphosphate nucleotidase CysQ of Escherichia coli O6:H1 (strain CFT073 / ATCC 700928 / UPEC).